The following is a 251-amino-acid chain: Spermatogenesis-associated protein 46 (251 aa).

The protein resides in the nucleus membrane. Functionally, plays a role in spermiogenesis and fertilization. In Macaca fascicularis (Crab-eating macaque), this protein is Spermatogenesis-associated protein 46 (SPATA46).